A 544-amino-acid chain; its full sequence is Hydroxylamine reductase (544 aa).

4 residues coordinate [4Fe-4S] cluster: Cys3, Cys6, Cys15, and Cys21. Hybrid [4Fe-2O-2S] cluster contacts are provided by His244, Glu268, Cys313, Cys400, Cys428, Cys453, Glu487, and Lys489. Cys400 is modified (cysteine persulfide).

Belongs to the HCP family. Requires [4Fe-4S] cluster as cofactor. Hybrid [4Fe-2O-2S] cluster is required as a cofactor.

It localises to the cytoplasm. The catalysed reaction is A + NH4(+) + H2O = hydroxylamine + AH2 + H(+). Catalyzes the reduction of hydroxylamine to form NH(3) and H(2)O. In Trichormus variabilis (strain ATCC 29413 / PCC 7937) (Anabaena variabilis), this protein is Hydroxylamine reductase.